Consider the following 482-residue polypeptide: Potential E3 ubiquitin-protein ligase ariadne-2 (482 aa).

The TRIAD supradomain stretch occupies residues 125 to 334 (AKGYCSVCAM…SEYYECSRYK (210 aa)). Positions 129, 132, 145, 147, 150, 153, 172, 177, 218, 223, 239, 242, 247, 250, 255, 260, 287, and 290 each coordinate Zn(2+). The segment at 129-177 (CSVCAMDGYTELPHLTCGHCFCEHCWKSHVESRLSEGVASRIECMESEC) adopts an RING-type 1 zinc-finger fold. The IBR-type zinc-finger motif lies at 198–260 (LKYERFLLRD…GADYHAPTSC (63 aa)). Residues 287–316 (CPQCHSCIEKAGGCNHIQCTRCRHHFCWMC) form an RING-type 2; atypical zinc finger. The active site involves C300. Zn(2+)-binding residues include C305, C308, C313, C316, H323, and C330. Residues 433-459 (FEYQQAQLEKEVEELAWAVERADGTAR) adopt a coiled-coil conformation.

Belongs to the RBR family. Ariadne subfamily.

The protein localises to the nucleus. It catalyses the reaction [E2 ubiquitin-conjugating enzyme]-S-ubiquitinyl-L-cysteine + [acceptor protein]-L-lysine = [E2 ubiquitin-conjugating enzyme]-L-cysteine + [acceptor protein]-N(6)-ubiquitinyl-L-lysine.. Functionally, might act as an E3 ubiquitin-protein ligase, or as part of E3 complex, which accepts ubiquitin from specific E2 ubiquitin-conjugating enzymes, such as UBC-2/UBE2L3, and then transfers it to substrates. This is Potential E3 ubiquitin-protein ligase ariadne-2 from Caenorhabditis elegans.